A 345-amino-acid polypeptide reads, in one-letter code: cAMP-responsive element modulator (345 aa).

A KID domain is found at 88 to 147 (VQVAAIAETDESAESEGVIDSHKRREILSRRPSYRKILNELSSDVPGVPKIEEERSEEEG). Phosphoserine occurs at positions 102, 129, 271, 274, and 277. The bZIP domain occupies 286–345 (TRKRELRLMKNREAAKECRRRKKEYVKCLESRVAVLEVQNKKLIEELETLKDICSPKTDY). A basic motif region spans residues 287–312 (RKRELRLMKNREAAKECRRRKKEYVK). The leucine-zipper stretch occupies residues 314–335 (LESRVAVLEVQNKKLIEELETL).

It belongs to the bZIP family. In terms of assembly, binds DNA as a dimer. Interacts with FHL5. Interacts with CDC34. May interact with TSSK4. In terms of processing, isoform 9 is ubiquitinated by CDC34 and RAD6B in order to be degraded by the proteasome. Post-translationally, stimulated by phosphorylation. Phosphorylated on Ser-116 by TSSK4 in vitro. Expressed in testes (round spermatids) (at protein level). Isoform 14 is the major activator form in testes.

The protein localises to the nucleus. The protein resides in the cytoplasm. Its function is as follows. Transcriptional regulator that binds the cAMP response element (CRE), a sequence present in many viral and cellular promoters. Isoforms are either transcriptional activators or repressors. Plays a role in spermatogenesis and is involved in spermatid maturation. Functionally, may play a role in the regulation of the circadian clock: acts as a transcriptional repressor of the core circadian component PER1 by directly binding to cAMP response elements in its promoter. The polypeptide is cAMP-responsive element modulator (Homo sapiens (Human)).